A 136-amino-acid polypeptide reads, in one-letter code: Fluoride-specific ion channel FluC (136 aa).

A run of 4 helical transmembrane segments spans residues 3-23, 46-66, 78-98, and 109-129; these read TLPP…GAVL, ATLA…GVLF, LLIG…SLEV, and FAAL…VFGL. The Na(+) site is built by G86 and T89.

This sequence belongs to the fluoride channel Fluc/FEX (TC 1.A.43) family.

Its subcellular location is the cell inner membrane. It carries out the reaction fluoride(in) = fluoride(out). Na(+) is not transported, but it plays an essential structural role and its presence is essential for fluoride channel function. Functionally, fluoride-specific ion channel. Important for reducing fluoride concentration in the cell, thus reducing its toxicity. The chain is Fluoride-specific ion channel FluC from Erythrobacter litoralis (strain HTCC2594).